The chain runs to 257 residues: OCIA domain-containing protein 1 (257 aa).

Disordered regions lie at residues 1-20 (MDSP…PHPL) and 148-257 (YSDE…SWTD). Positions 1-110 (MDSPLNDGSH…MRLPNSHLGE (110 aa)) constitute an OCIA domain. Residues 156–170 (GRSTSLNLDTESRPT) are compositionally biased toward polar residues. The span at 204-216 (EDLRRRNREEYSK) shows a compositional bias: basic and acidic residues.

It belongs to the OCIAD1 family. As to quaternary structure, interacts with STAT3 and ARF1. As to expression, expressed in all cells of the primary lymph gland lobe.

It is found in the endosome. In terms of biological role, maintains stem cell potency. Involved in endocytic pathways that mediate signaling during hematopoiesis. The protein is OCIA domain-containing protein 1 (asrij) of Drosophila melanogaster (Fruit fly).